We begin with the raw amino-acid sequence, 535 residues long: CTP synthase (535 aa).

The interval 1-268 is amidoligase domain; it reads MSTKYIFVTG…DQIVCDHLKL (268 aa). Ser-14 contributes to the CTP binding site. Ser-14 serves as a coordination point for UTP. ATP is bound at residue 15–20; it reads SMGKGI. Tyr-55 contacts L-glutamine. An ATP-binding site is contributed by Asp-72. The Mg(2+) site is built by Asp-72 and Glu-142. Residues 149-151, 189-194, and Lys-225 contribute to the CTP site; these read DME and KTKIAQ. UTP contacts are provided by residues 189-194 and Lys-225; that span reads KTKIAQ. The region spanning 293 to 535 is the Glutamine amidotransferase type-1 domain; that stretch reads KIALVGKYVE…FIRVAVENSK (243 aa). Gly-355 serves as a coordination point for L-glutamine. The active-site Nucleophile; for glutamine hydrolysis is the Cys-382. L-glutamine-binding positions include 383 to 386, Glu-406, and Arg-464; that span reads LGMQ. Residues His-509 and Glu-511 contribute to the active site.

This sequence belongs to the CTP synthase family. Homotetramer.

It catalyses the reaction UTP + L-glutamine + ATP + H2O = CTP + L-glutamate + ADP + phosphate + 2 H(+). It carries out the reaction L-glutamine + H2O = L-glutamate + NH4(+). The catalysed reaction is UTP + NH4(+) + ATP = CTP + ADP + phosphate + 2 H(+). It participates in pyrimidine metabolism; CTP biosynthesis via de novo pathway; CTP from UDP: step 2/2. Allosterically activated by GTP, when glutamine is the substrate; GTP has no effect on the reaction when ammonia is the substrate. The allosteric effector GTP functions by stabilizing the protein conformation that binds the tetrahedral intermediate(s) formed during glutamine hydrolysis. Inhibited by the product CTP, via allosteric rather than competitive inhibition. In terms of biological role, catalyzes the ATP-dependent amination of UTP to CTP with either L-glutamine or ammonia as the source of nitrogen. Regulates intracellular CTP levels through interactions with the four ribonucleotide triphosphates. This Lactococcus lactis subsp. lactis (strain IL1403) (Streptococcus lactis) protein is CTP synthase.